A 403-amino-acid polypeptide reads, in one-letter code: MLHHVKLIYATKSRKLVGKKIVLAIPGSIAAVECVKLARELIRHGAEVHAVMSENATKIIHPYAMEFATGNPVVTEITGFIEHVELAGEHENKADLVLVCPATANTISKIACGIDDTPVTTVVTTAFAHTPIMIAPAMHSTMYDHPIVKENIEKLKKLGVEFIEPRFEEGKAKVASIEEIVYRVIRKLHPKSLEGKRVLVTAGATREYIDPIRYITNASSGKMGVAIAEEAEFRGAEVTLIRTKSSVPSFVENQIEVETVEEMLEAIESELKGKKYDVVVLAAAVSDFRVKNKADVKIKSGQPLVLELEPTPKIIDRVKELQPGVFLVGFKAETGLSEEELISAARKQIERAGSDLVVANTLKAFGSEENEVVLVGRDFAKKLPRMTKRELAERLWDEIEKML.

A phosphopantothenoylcysteine decarboxylase region spans residues 1–197; the sequence is MLHHVKLIYA…LHPKSLEGKR (197 aa). Positions 198–403 are phosphopantothenate--cysteine ligase; the sequence is VLVTAGATRE…RLWDEIEKML (206 aa). CTP-binding residues include Asp-287, Lys-297, and Phe-330.

This sequence in the N-terminal section; belongs to the HFCD (homo-oligomeric flavin containing Cys decarboxylase) superfamily. In the C-terminal section; belongs to the PPC synthetase family. It depends on Mg(2+) as a cofactor. FMN is required as a cofactor.

The catalysed reaction is N-[(R)-4-phosphopantothenoyl]-L-cysteine + H(+) = (R)-4'-phosphopantetheine + CO2. The enzyme catalyses (R)-4'-phosphopantothenate + L-cysteine + CTP = N-[(R)-4-phosphopantothenoyl]-L-cysteine + CMP + diphosphate + H(+). Its pathway is cofactor biosynthesis; coenzyme A biosynthesis. Its function is as follows. Catalyzes two sequential steps in the biosynthesis of coenzyme A. In the first step cysteine is conjugated to 4'-phosphopantothenate to form 4-phosphopantothenoylcysteine. In the second step the latter compound is decarboxylated to form 4'-phosphopantotheine. The chain is Coenzyme A biosynthesis bifunctional protein CoaBC from Thermococcus kodakarensis (strain ATCC BAA-918 / JCM 12380 / KOD1) (Pyrococcus kodakaraensis (strain KOD1)).